Consider the following 574-residue polypeptide: Developmental and secondary metabolism regulator veA (574 aa).

4 disordered regions span residues 1–22 (MATR…SRIT), 39–60 (ERAR…VDPP), 255–500 (RSSD…GAGK), and 513–540 (RSYE…YPRR). The Velvet domain occupies 25–230 (GKKLTYKLNV…AEQGCRVRIR (206 aa)). The short motif at 39-44 (ERARAC) is the Nuclear localization signal element. Pro residues-rich tracts occupy residues 314–323 (RPLPPAPGPA) and 330–341 (PAPPAPPAPPSH). 4 stretches are compositionally biased toward polar residues: residues 343 to 353 (PGYQSHLSFGS), 385 to 394 (HARNPSTSAE), 406 to 415 (RMSTERSSYP), and 448 to 458 (VAQSAAPRSQT). The interval 457–501 (QTPSSSLVPSLPPLKALSGDYPNNLSQSSSSTSQSPSHDLGAGKK) is PEST. Low complexity-rich tracts occupy residues 459-474 (PSSS…KALS) and 482-493 (SQSSSSTSQSPS). Basic and acidic residues predominate over residues 513–525 (RSYEDSFGHDDRP).

Belongs to the velvet family. VeA subfamily. Component of the heterotrimeric velvet complex composed of laeA, veA and velB; VeA acting as a bridging protein between laeA and velB.

The protein localises to the nucleus. It is found in the cytoplasm. Functionally, component of the velvet transcription factor complex that controls sexual/asexual developmental ratio in response to light, promoting sexual development in the darkness while stimulating asexual sporulation under illumination. The velvet complex hat acts as a global regulator for secondary metabolite gene expression. Controls the expression of the penicillin gene cluster. This chain is Developmental and secondary metabolism regulator veA, found in Aspergillus oryzae (strain ATCC 42149 / RIB 40) (Yellow koji mold).